The sequence spans 1161 residues: Nardilysin (1161 aa).

An N-terminal signal peptide occupies residues Met-1–Arg-18. Disordered regions lie at residues Lys-42–Ser-105 and Val-130–Thr-218. A phosphoserine mark is found at Ser-85, Ser-91, and Ser-93. Residues Thr-138–Glu-209 are compositionally biased toward acidic residues. His-244 contributes to the Zn(2+) binding site. Glu-247 serves as the catalytic Proton acceptor. The Zn(2+) site is built by His-248 and Glu-325.

It belongs to the peptidase M16 family. In terms of assembly, interacts with BACE1 and NRG1. Zn(2+) is required as a cofactor. In terms of tissue distribution, testis, and in a lower level in brain, heart and adrenal glands.

It is found in the mitochondrion. The protein resides in the cell projection. It localises to the dendrite. The enzyme catalyses Hydrolysis of polypeptides, preferably at -Xaa-|-Arg-Lys-, and less commonly at -Arg-|-Arg-Xaa-, in which Xaa is not Arg or Lys.. In terms of biological role, cleaves peptide substrates on the N-terminus of arginine residues in dibasic pairs. Is a critical activator of BACE1- and ADAM17-mediated pro-neuregulin ectodomain shedding, involved in the positive regulation of axonal maturation and myelination. Required for proper functioning of 2-oxoglutarate dehydrogenase (OGDH). This Rattus norvegicus (Rat) protein is Nardilysin.